We begin with the raw amino-acid sequence, 156 residues long: RNA pyrophosphohydrolase (156 aa).

The region spanning 6–148 (NYRPNVAAIV…KKNIYVRVIK (143 aa)) is the Nudix hydrolase domain. The Nudix box signature appears at 43 to 64 (GGIDKGESVKNALFRELKEEIG).

It belongs to the Nudix hydrolase family. RppH subfamily. It depends on a divalent metal cation as a cofactor.

Functionally, accelerates the degradation of transcripts by removing pyrophosphate from the 5'-end of triphosphorylated RNA, leading to a more labile monophosphorylated state that can stimulate subsequent ribonuclease cleavage. The protein is RNA pyrophosphohydrolase of Campylobacter jejuni subsp. jejuni serotype O:2 (strain ATCC 700819 / NCTC 11168).